Reading from the N-terminus, the 760-residue chain is Elongation factor G, mitochondrial (760 aa).

A mitochondrion-targeting transit peptide spans 1-37 (MIRGMLPRGLRALRPSVSPTVVSSSLHRNFHSSIRRF). The region spanning 68–349 (SRLRNIGVSA…AVVDYLPQPN (282 aa)) is the tr-type G domain. GTP contacts are provided by residues 77 to 84 (AHIDSGKT), 148 to 152 (DTPGH), and 202 to 205 (NKMD).

It belongs to the TRAFAC class translation factor GTPase superfamily. Classic translation factor GTPase family. EF-G/EF-2 subfamily.

The protein resides in the mitochondrion. It functions in the pathway protein biosynthesis; polypeptide chain elongation. Functionally, mitochondrial GTPase that catalyzes the GTP-dependent ribosomal translocation step during translation elongation. During this step, the ribosome changes from the pre-translocational (PRE) to the post-translocational (POST) state as the newly formed A-site-bound peptidyl-tRNA and P-site-bound deacylated tRNA move to the P and E sites, respectively. Catalyzes the coordinated movement of the two tRNA molecules, the mRNA and conformational changes in the ribosome. This Meyerozyma guilliermondii (strain ATCC 6260 / CBS 566 / DSM 6381 / JCM 1539 / NBRC 10279 / NRRL Y-324) (Yeast) protein is Elongation factor G, mitochondrial.